The sequence spans 195 residues: Ras-related protein Rab-31 (195 aa).

7 residues coordinate GTP: glycine 16, glycine 18, lysine 19, serine 20, serine 21, aspartate 32, and histidine 33. Serine 20 serves as a coordination point for Mg(2+). 2 short sequence motifs (switch) span residues 30–42 (HFDHNISPTIGAS) and 63–79 (AGQERFHSLAPMYYRGS). Serine 36 is subject to Phosphoserine. GTP contacts are provided by threonine 38, glycine 64, asparagine 119, aspartate 122, alanine 150, and lysine 151. A Mg(2+)-binding site is contributed by threonine 38. S-geranylgeranyl cysteine attachment occurs at residues cysteine 194 and cysteine 195.

It belongs to the small GTPase superfamily. Rab family. As to quaternary structure, interacts with OCRL. Interacts with NGFR. Interacts (in GDP-bound form) with RIN3 and GAPVD1, which function as guanine exchange factors (GEF). Interacts (in GTP-bound form) with EEA1. Interacts with EGFR. Interacts (in GTP-bound form) with APPL2; interaction contributes to or enhances recruitment of APPL2 to the phagosomes; interaction enhances Fc-gamma receptor-mediated phagocytosis through PI3K/Akt signaling in macrophages. The cofactor is Mg(2+). As to expression, highest expression in placenta and brain with lower levels in heart and lung. Not detected in liver, skeletal muscle, kidney or pancreas.

It is found in the golgi apparatus. The protein resides in the trans-Golgi network. The protein localises to the trans-Golgi network membrane. Its subcellular location is the early endosome. It localises to the cytoplasmic vesicle. It is found in the phagosome. The protein resides in the phagosome membrane. The enzyme catalyses GTP + H2O = GDP + phosphate + H(+). Its activity is regulated as follows. Regulated by guanine nucleotide exchange factors (GEFs) including RIN3 and GAPVD1 which promote the exchange of bound GDP for free GTP. Regulated by GTPase activating proteins (GAPs) which increase the GTP hydrolysis activity. Inhibited by GDP dissociation inhibitors (GDIs) which prevent Rab-GDP dissociation. In terms of biological role, the small GTPases Rab are key regulators of intracellular membrane trafficking, from the formation of transport vesicles to their fusion with membranes. Rabs cycle between an inactive GDP-bound form and an active GTP-bound form that is able to recruit to membranes different set of downstream effectors directly responsible for vesicle formation, movement, tethering and fusion. Required for the integrity and for normal function of the Golgi apparatus and the trans-Golgi network. Plays a role in insulin-stimulated translocation of GLUT4 to the cell membrane. Plays a role in M6PR transport from the trans-Golgi network to endosomes. Plays a role in the internalization of EGFR from the cell membrane into endosomes. Plays a role in the maturation of phagosomes that engulf pathogens, such as S.aureus and M.tuberculosis. The protein is Ras-related protein Rab-31 of Homo sapiens (Human).